A 78-amino-acid polypeptide reads, in one-letter code: Small ribosomal subunit protein uS17 (78 aa).

The protein belongs to the universal ribosomal protein uS17 family. In terms of assembly, part of the 30S ribosomal subunit.

One of the primary rRNA binding proteins, it binds specifically to the 5'-end of 16S ribosomal RNA. This is Small ribosomal subunit protein uS17 from Sinorhizobium medicae (strain WSM419) (Ensifer medicae).